A 230-amino-acid chain; its full sequence is UPF0494 membrane protein C1348.07 (230 aa).

A run of 3 helical transmembrane segments spans residues 78–98, 120–140, and 148–168; these read WPLL…NFEV, IWGP…GLIY, and AIPL…VAMV.

The protein belongs to the UPF0494 family.

It localises to the vacuole. The protein localises to the membrane. This Schizosaccharomyces pombe (strain 972 / ATCC 24843) (Fission yeast) protein is UPF0494 membrane protein C1348.07.